Reading from the N-terminus, the 214-residue chain is MALRSLSKIDQLLLGVDKALRAVVPHSNPSTRPLPVSSDEIPELSITESRHVAGLMRINHTGEVCAQGLYHGQAFTAKDNSVKRAMQQSAEEEVDHLVWCETRLSELGSHPSVFTPLWYGMSFGLGAVAGAISNEFSLGFVAETEAQVSEHLQDHIGQLPPQDQRSKEILAQMDSEELHHRELALANGGAALSPLMRHTMRWMANRMKATAYHF.

Fe cation contacts are provided by glutamate 63, glutamate 93, histidine 96, glutamate 145, glutamate 177, and histidine 180.

It belongs to the COQ7 family. It depends on Fe cation as a cofactor.

The protein resides in the cell membrane. The enzyme catalyses a 5-methoxy-2-methyl-3-(all-trans-polyprenyl)benzene-1,4-diol + AH2 + O2 = a 3-demethylubiquinol + A + H2O. Its pathway is cofactor biosynthesis; ubiquinone biosynthesis. Functionally, catalyzes the hydroxylation of 2-nonaprenyl-3-methyl-6-methoxy-1,4-benzoquinol during ubiquinone biosynthesis. This chain is 3-demethoxyubiquinol 3-hydroxylase, found in Psychrobacter cryohalolentis (strain ATCC BAA-1226 / DSM 17306 / VKM B-2378 / K5).